The primary structure comprises 163 residues: Cyclic pyranopterin monophosphate synthase (163 aa).

Residues 74–76 (MCH) and 111–112 (ME) contribute to the substrate site. D126 is an active-site residue.

Belongs to the MoaC family. In terms of assembly, homohexamer; trimer of dimers.

The enzyme catalyses (8S)-3',8-cyclo-7,8-dihydroguanosine 5'-triphosphate = cyclic pyranopterin phosphate + diphosphate. Its pathway is cofactor biosynthesis; molybdopterin biosynthesis. Its function is as follows. Catalyzes the conversion of (8S)-3',8-cyclo-7,8-dihydroguanosine 5'-triphosphate to cyclic pyranopterin monophosphate (cPMP). This is Cyclic pyranopterin monophosphate synthase from Desulfitobacterium hafniense (strain DSM 10664 / DCB-2).